Reading from the N-terminus, the 391-residue chain is Processive diacylglycerol beta-glucosyltransferase (391 aa).

Belongs to the glycosyltransferase 28 family. UgtP subfamily.

The protein localises to the cell membrane. It catalyses the reaction a 1,2-diacyl-3-O-(beta-D-glucopyranosyl)-sn-glycerol + UDP-alpha-D-glucose = a 1,2-diacyl-3-O-(beta-D-Glc-(1-&gt;6)-beta-D-Glc)-sn-glycerol + UDP + H(+). It carries out the reaction a 1,2-diacyl-sn-glycerol + UDP-alpha-D-glucose = a 1,2-diacyl-3-O-(beta-D-glucopyranosyl)-sn-glycerol + UDP + H(+). It participates in glycolipid metabolism; diglucosyl-diacylglycerol biosynthesis. Processive glucosyltransferase involved in the biosynthesis of both the bilayer- and non-bilayer-forming membrane glucolipids. Is able to successively transfer two glucosyl residues to diacylglycerol (DAG), thereby catalyzing the formation of beta-monoglucosyl-DAG (3-O-(beta-D-glucopyranosyl)-1,2-diacyl-sn-glycerol) and beta-diglucosyl-DAG (3-O-(beta-D-glucopyranosyl-beta-(1-&gt;6)-D-glucopyranosyl)-1,2-diacyl-sn-glycerol). Beta-diglucosyl-DAG is the predominant glycolipid found in Bacillales and is also used as a membrane anchor for lipoteichoic acid (LTA). This is Processive diacylglycerol beta-glucosyltransferase from Staphylococcus aureus (strain MW2).